The primary structure comprises 269 residues: Centromere protein K (269 aa).

Over residues M1–S10 the composition is skewed to acidic residues. Residues M1 to T20 are disordered. Coiled-coil stretches lie at residues E22–L42 and Q98–E151.

This sequence belongs to the CENP-K/MCM22 family. In terms of assembly, component of the CENPA-CAD complex, composed of CENPI, CENPK, CENPL, CENPO, CENPP, CENPQ, CENPR and CENPS. The CENPA-CAD complex interacts with the CENPA-NAC complex, at least composed of CENPA, CENPC, CENPH, CENPM, CENPN, CENPT and CENPU. Interacts directly with CENPH. In terms of tissue distribution, detected in several fetal organs with highest levels in fetal liver. In adults, it is weakly expressed in lung and placenta.

It localises to the nucleus. The protein resides in the chromosome. It is found in the centromere. Its subcellular location is the kinetochore. Component of the CENPA-CAD (nucleosome distal) complex, a complex recruited to centromeres which is involved in assembly of kinetochore proteins, mitotic progression and chromosome segregation. May be involved in incorporation of newly synthesized CENPA into centromeres via its interaction with the CENPA-NAC complex. Acts in coordination with KNL1 to recruit the NDC80 complex to the outer kinetochore. The sequence is that of Centromere protein K (CENPK) from Homo sapiens (Human).